Consider the following 688-residue polypeptide: Protein sel-1 homolog 2 (688 aa).

The signal sequence occupies residues 1–18 (MNPLALLVEILIIIEVTT). Residues 19–662 (KNTEAERYNR…KWKWLKLDST (644 aa)) are Extracellular-facing. The N-linked (GlcNAc...) asparagine glycan is linked to asparagine 34. Sel1-like repeat units follow at residues 107-142 (GDELFKMGNKILQESKSQKQKTEAYTLFTRAANMGN), 143-178 (LKAMEKMADAWLFGSFGMQNITAAIQLYESLAKEGS), 179-214 (YKAQNALGFLSSYGIGMEYDQAKALIYYTFGSAGGS), 215-250 (MMSQMILGYRYLSGINVLQNCEVALNHYKKVADYIA), 297-333 (VQIQVSLGQLHLIGRKGLDQDYSKALYYFLKAAKAGS), 334-370 (ANAMAFIGKMYFEGNAAAPQNNATAFKYFSMAASKGN), 371-406 (AIGLHGLGLLYFHGKGVPVNYGEALKYFQKAAEKGW), 407-442 (PNAQFQLGFMYYSGSGVWKDYKLAFKYFYLASQSGQ), 443-478 (PLAIYYLAEMYATGTGVLRSCRTAVELYKGVCELGH), 551-586 (AFARVKIGDYHYYGYGTKKDYETAATHYSIAADKHH), and 588-623 (AQAMFNLAYMYEHGLGIAKDIHLARRLYDMAAQTSP). Asparagine 162 carries N-linked (GlcNAc...) asparagine glycosylation. The helical transmembrane segment at 663–683 (VGPYWDLLVIGLIVAMLIFLL) threads the bilayer. Topologically, residues 684–688 (RNRHR) are cytoplasmic.

The protein belongs to the sel-1 family.

The protein localises to the membrane. It localises to the cell projection. Its subcellular location is the cilium. The protein resides in the nucleus speckle. The chain is Protein sel-1 homolog 2 (Sel1l2) from Mus musculus (Mouse).